The primary structure comprises 433 residues: Putative tartrate transporter (433 aa).

The next 11 helical transmembrane spans lie at 17–37, 47–67, 82–102, 113–133, 139–159, 177–197, 242–262, 275–295, 314–334, 350–370, and 395–415; these read IVPF…NIGF, GFSS…YFLF, IWIA…AFVQ, LLGV…SFWF, AAVT…GSPI, WMFL…LFYL, VIAL…LGIW, LQVG…MVLW, LLAA…TVLI, LWSM…IATI, and FAGG…VTLV.

The protein belongs to the major facilitator superfamily. Phthalate permease family.

Its subcellular location is the cell membrane. Functionally, component of the tartrate utilization system and may allow entry of tartrate and tartrate dehydrogenase. The polypeptide is Putative tartrate transporter (ttuB) (Agrobacterium vitis (Rhizobium vitis)).